A 404-amino-acid polypeptide reads, in one-letter code: Dual-specificity RNA methyltransferase RlmN (404 aa).

Residue Glu119 is the Proton acceptor of the active site. The Radical SAM core domain occupies 126-358 (VGRAGALCVS…NKAGYSSPIR (233 aa)). A disulfide bridge links Cys133 with Cys369. [4Fe-4S] cluster-binding residues include Cys140, Cys144, and Cys147. Residues 195 to 196 (GE), Ser227, 249 to 251 (SLH), and Asn326 contribute to the S-adenosyl-L-methionine site. The active-site S-methylcysteine intermediate is Cys369.

This sequence belongs to the radical SAM superfamily. RlmN family. [4Fe-4S] cluster is required as a cofactor.

Its subcellular location is the cytoplasm. It catalyses the reaction adenosine(2503) in 23S rRNA + 2 reduced [2Fe-2S]-[ferredoxin] + 2 S-adenosyl-L-methionine = 2-methyladenosine(2503) in 23S rRNA + 5'-deoxyadenosine + L-methionine + 2 oxidized [2Fe-2S]-[ferredoxin] + S-adenosyl-L-homocysteine. It carries out the reaction adenosine(37) in tRNA + 2 reduced [2Fe-2S]-[ferredoxin] + 2 S-adenosyl-L-methionine = 2-methyladenosine(37) in tRNA + 5'-deoxyadenosine + L-methionine + 2 oxidized [2Fe-2S]-[ferredoxin] + S-adenosyl-L-homocysteine. Specifically methylates position 2 of adenine 2503 in 23S rRNA and position 2 of adenine 37 in tRNAs. m2A2503 modification seems to play a crucial role in the proofreading step occurring at the peptidyl transferase center and thus would serve to optimize ribosomal fidelity. The protein is Dual-specificity RNA methyltransferase RlmN of Caulobacter sp. (strain K31).